Reading from the N-terminus, the 385-residue chain is tRNA (guanine(26)-N(2))-dimethyltransferase (385 aa).

The 379-residue stretch at 1-379 (MNITEGVVEL…ATIAEIRSAT (379 aa)) folds into the Trm1 methyltransferase domain. Positions 37, 67, 82, 108, and 109 each coordinate S-adenosyl-L-methionine. Positions 247, 250, 267, and 270 each coordinate Zn(2+).

Belongs to the class I-like SAM-binding methyltransferase superfamily. Trm1 family.

The catalysed reaction is guanosine(26) in tRNA + 2 S-adenosyl-L-methionine = N(2)-dimethylguanosine(26) in tRNA + 2 S-adenosyl-L-homocysteine + 2 H(+). Functionally, dimethylates a single guanine residue at position 26 of a number of tRNAs using S-adenosyl-L-methionine as donor of the methyl groups. This Haloquadratum walsbyi (strain DSM 16790 / HBSQ001) protein is tRNA (guanine(26)-N(2))-dimethyltransferase.